Reading from the N-terminus, the 148-residue chain is D-aminoacyl-tRNA deacylase (148 aa).

The short motif at 137–138 is the Gly-cisPro motif, important for rejection of L-amino acids element; sequence GP.

The protein belongs to the DTD family. In terms of assembly, homodimer.

Its subcellular location is the cytoplasm. The enzyme catalyses glycyl-tRNA(Ala) + H2O = tRNA(Ala) + glycine + H(+). The catalysed reaction is a D-aminoacyl-tRNA + H2O = a tRNA + a D-alpha-amino acid + H(+). Functionally, an aminoacyl-tRNA editing enzyme that deacylates mischarged D-aminoacyl-tRNAs. Also deacylates mischarged glycyl-tRNA(Ala), protecting cells against glycine mischarging by AlaRS. Acts via tRNA-based rather than protein-based catalysis; rejects L-amino acids rather than detecting D-amino acids in the active site. By recycling D-aminoacyl-tRNA to D-amino acids and free tRNA molecules, this enzyme counteracts the toxicity associated with the formation of D-aminoacyl-tRNA entities in vivo and helps enforce protein L-homochirality. In Lacticaseibacillus casei (strain BL23) (Lactobacillus casei), this protein is D-aminoacyl-tRNA deacylase.